A 398-amino-acid chain; its full sequence is Argininosuccinate lyase (398 aa).

This sequence belongs to the lyase 1 family. Argininosuccinate lyase subfamily.

It localises to the cytoplasm. It catalyses the reaction 2-(N(omega)-L-arginino)succinate = fumarate + L-arginine. The protein operates within amino-acid biosynthesis; L-arginine biosynthesis; L-arginine from L-ornithine and carbamoyl phosphate: step 3/3. The sequence is that of Argininosuccinate lyase from Thermotoga neapolitana (strain ATCC 49049 / DSM 4359 / NBRC 107923 / NS-E).